The following is a 154-amino-acid chain: Large ribosomal subunit protein uL30 (154 aa).

This sequence belongs to the universal ribosomal protein uL30 family. Part of the 50S ribosomal subunit.

The polypeptide is Large ribosomal subunit protein uL30 (Methanococcus maripaludis (strain C5 / ATCC BAA-1333)).